The sequence spans 647 residues: Bifunctional enzyme CysN/CysC (647 aa).

The sulfate adenylyltransferase stretch occupies residues 1 to 472 (MSHQSDLIAT…TEERAARFGQ (472 aa)). In terms of domain architecture, tr-type G spans 22 to 239 (KQLLRFITCG…LETVYIGSDR (218 aa)). Residues 31-38 (GSVDDGKS) form a G1 region. 31–38 (GSVDDGKS) provides a ligand contact to GTP. Residues 89–93 (GITID) are G2. Residues 110-113 (DTPG) form a G3 region. GTP-binding positions include 110–114 (DTPGH) and 165–168 (NKMD). Residues 165 to 168 (NKMD) are G4. The interval 204 to 206 (SAL) is G5. The interval 473-614 (KPATVLLTGL…FPGVTAKYDV (142 aa)) is adenylyl-sulfate kinase. 481–488 (GLTGSGKT) contributes to the ATP binding site.

In the C-terminal section; belongs to the APS kinase family. The protein in the N-terminal section; belongs to the TRAFAC class translation factor GTPase superfamily. Classic translation factor GTPase family. CysN/NodQ subfamily. Heterodimer composed of CysD, the smaller subunit, and CysNC.

It carries out the reaction sulfate + ATP + H(+) = adenosine 5'-phosphosulfate + diphosphate. The catalysed reaction is adenosine 5'-phosphosulfate + ATP = 3'-phosphoadenylyl sulfate + ADP + H(+). It participates in sulfur metabolism; hydrogen sulfide biosynthesis; sulfite from sulfate: step 1/3. It functions in the pathway sulfur metabolism; hydrogen sulfide biosynthesis; sulfite from sulfate: step 2/3. Its function is as follows. With CysD forms the ATP sulfurylase (ATPS) that catalyzes the adenylation of sulfate producing adenosine 5'-phosphosulfate (APS) and diphosphate, the first enzymatic step in sulfur assimilation pathway. APS synthesis involves the formation of a high-energy phosphoric-sulfuric acid anhydride bond driven by GTP hydrolysis by CysN coupled to ATP hydrolysis by CysD. Functionally, APS kinase catalyzes the synthesis of activated sulfate. The sequence is that of Bifunctional enzyme CysN/CysC (cysNC) from Rhodopirellula baltica (strain DSM 10527 / NCIMB 13988 / SH1).